A 499-amino-acid chain; its full sequence is GTPase Der (499 aa).

The EngA-type G 1 domain occupies 3 to 166 (PVIALVGRPN…QALGIFPKDN (164 aa)). GTP is bound by residues 9–16 (GRPNVGKS), 56–60 (DTGGI), and 118–121 (NKVD). Residues 166–199 (NADENAEGEEGGELAEGEEVVAEGQEPKRIPGPS) form a disordered region. The segment covering 168-186 (DENAEGEEGGELAEGEEVV) has biased composition (acidic residues). Residues 190–199 (QEPKRIPGPS) show a composition bias toward basic and acidic residues. The 174-residue stretch at 204-377 (IKIAIIGRPN…SVQAAFKSAI (174 aa)) folds into the EngA-type G 2 domain. Residues 210-217 (GRPNVGKS), 257-261 (DTAGV), and 322-325 (NKWD) each bind GTP. A KH-like domain is found at 378 to 462 (TRWPTSRLTQ…PIRIEYKGGD (85 aa)). Over residues 459–472 (KGGDNPYEGKKNTL) the composition is skewed to basic and acidic residues. The interval 459 to 499 (KGGDNPYEGKKNTLTDRQVNKKRRLMSHHKKAEKKRRDKKR) is disordered. Over residues 478–499 (NKKRRLMSHHKKAEKKRRDKKR) the composition is skewed to basic residues.

Belongs to the TRAFAC class TrmE-Era-EngA-EngB-Septin-like GTPase superfamily. EngA (Der) GTPase family. As to quaternary structure, associates with the 50S ribosomal subunit.

In terms of biological role, GTPase that plays an essential role in the late steps of ribosome biogenesis. The polypeptide is GTPase Der (Stutzerimonas stutzeri (strain A1501) (Pseudomonas stutzeri)).